A 548-amino-acid polypeptide reads, in one-letter code: Sesquiterpene synthase TPS1 (548 aa).

The (2E,6E)-farnesyl diphosphate site is built by Arg264, Asp301, Asp305, Arg442, and Asp445. Asp301 and Asp305 together coordinate Mg(2+). Positions Asp301–Asp305 match the DDXXD motif motif. Asp445 and Glu453 together coordinate Mg(2+).

It belongs to the terpene synthase family. Tpsa subfamily. In terms of assembly, monomer. It depends on Mg(2+) as a cofactor. As to expression, expressed in leaves and stems.

Its subcellular location is the cytoplasm. The catalysed reaction is (2E,6E)-farnesyl diphosphate = germacrene D + diphosphate. It carries out the reaction (2E,6E)-farnesyl diphosphate = (-)-(E)-beta-caryophyllene + diphosphate. It catalyses the reaction (2E,6E)-farnesyl diphosphate = beta-copaene + diphosphate. Its pathway is secondary metabolite biosynthesis; terpenoid biosynthesis. Sesquiterpene synthase involved in the biosynthesis of volatile compounds. Mediates the conversion of (2E,6E)-farnesyl diphosphate (FPP) into germacrene D, (-)-(E)-beta-caryophyllene and beta-copaene. The chain is Sesquiterpene synthase TPS1 from Xanthium strumarium (Rough cocklebur).